The primary structure comprises 90 residues: Probable Fe(2+)-trafficking protein (90 aa).

The protein belongs to the Fe(2+)-trafficking protein family.

Functionally, could be a mediator in iron transactions between iron acquisition and iron-requiring processes, such as synthesis and/or repair of Fe-S clusters in biosynthetic enzymes. The polypeptide is Probable Fe(2+)-trafficking protein (Acinetobacter baylyi (strain ATCC 33305 / BD413 / ADP1)).